The following is a 149-amino-acid chain: Placenta growth factor (149 aa).

Residues 1 to 18 (MPTVRLFTCFLQLLTGLV) form the signal peptide. A glycan (N-linked (GlcNAc...) asparagine) is linked at N33. Cystine bridges form between C52–C94, C83–C128, and C87–C130. N-linked (GlcNAc...) asparagine glycosylation occurs at N101.

The protein belongs to the PDGF/VEGF growth factor family. Antiparallel homodimer; disulfide-linked. Also found as heterodimer with VEGFA/VEGF.

Its subcellular location is the secreted. Its function is as follows. Growth factor active in angiogenesis and endothelial cell growth, stimulating their proliferation and migration. It binds to the receptor FLT1/VEGFR-1. Also promotes cell tumor growth. The protein is Placenta growth factor (PGF) of Bos taurus (Bovine).